The following is a 188-amino-acid chain: dCTP deaminase (188 aa).

DCTP contacts are provided by residues 111 to 116, 135 to 137, Gln156, Tyr170, and Gln180; these read KSTYAR and TLE. Residue Glu137 is the Proton donor/acceptor of the active site.

Belongs to the dCTP deaminase family. As to quaternary structure, homotrimer.

It catalyses the reaction dCTP + H2O + H(+) = dUTP + NH4(+). It participates in pyrimidine metabolism; dUMP biosynthesis; dUMP from dCTP (dUTP route): step 1/2. Its function is as follows. Catalyzes the deamination of dCTP to dUTP. This chain is dCTP deaminase, found in Nitrosomonas eutropha (strain DSM 101675 / C91 / Nm57).